The chain runs to 33 residues: Dolabellanin-B2 (33 aa).

Contains two disulfide bonds. In terms of processing, up to two of the methionines may be oxidized to methionine sulfoxides.

It is found in the secreted. Its function is as follows. Has antibacterial activity against Gram-negative bacteria E.coli JM109 and DH5-alpha, H.influenza IID 983, and V.vulnificus RIMD 2219009. Has antibacterial activity against Gram-positive bacteria S.aureus IID 1677, B.subtilis RIMD 0225014 and L.monocytogenes VIU206. Possesses antifungal activity against S.cerevisiae A581A, S.pombe IFO 1628, C.albicans ATCC 36232 and TIMM-1623, and C.tropicalis TIMM-0313. In Dolabella auricularia (Shoulderblade sea cat), this protein is Dolabellanin-B2.